A 209-amino-acid chain; its full sequence is Large ribosomal subunit protein uL3 (209 aa).

The protein belongs to the universal ribosomal protein uL3 family. Part of the 50S ribosomal subunit. Forms a cluster with proteins L14 and L19.

In terms of biological role, one of the primary rRNA binding proteins, it binds directly near the 3'-end of the 23S rRNA, where it nucleates assembly of the 50S subunit. This Moorella thermoacetica (strain ATCC 39073 / JCM 9320) protein is Large ribosomal subunit protein uL3.